The sequence spans 187 residues: UPF0301 protein VV2869 (187 aa).

This sequence belongs to the UPF0301 (AlgH) family.

This Vibrio vulnificus (strain YJ016) protein is UPF0301 protein VV2869.